A 540-amino-acid polypeptide reads, in one-letter code: Chaperonin GroEL (540 aa).

Residues 29–32 (TLGP), 86–90 (DGTTT), glycine 413, and aspartate 495 each bind ATP.

This sequence belongs to the chaperonin (HSP60) family. In terms of assembly, forms a cylinder of 14 subunits composed of two heptameric rings stacked back-to-back. Interacts with the co-chaperonin GroES.

The protein localises to the cytoplasm. The catalysed reaction is ATP + H2O + a folded polypeptide = ADP + phosphate + an unfolded polypeptide.. Its function is as follows. Together with its co-chaperonin GroES, plays an essential role in assisting protein folding. The GroEL-GroES system forms a nano-cage that allows encapsulation of the non-native substrate proteins and provides a physical environment optimized to promote and accelerate protein folding. This is Chaperonin GroEL from Caldanaerobacter subterraneus subsp. tengcongensis (strain DSM 15242 / JCM 11007 / NBRC 100824 / MB4) (Thermoanaerobacter tengcongensis).